Reading from the N-terminus, the 61-residue chain is DNA-directed RNA polymerase subunit Rpo6 (61 aa).

This sequence belongs to the archaeal Rpo6/eukaryotic RPB6 RNA polymerase subunit family. In terms of assembly, part of the RNA polymerase complex.

The protein localises to the cytoplasm. The enzyme catalyses RNA(n) + a ribonucleoside 5'-triphosphate = RNA(n+1) + diphosphate. DNA-dependent RNA polymerase (RNAP) catalyzes the transcription of DNA into RNA using the four ribonucleoside triphosphates as substrates. The polypeptide is DNA-directed RNA polymerase subunit Rpo6 (Thermoplasma acidophilum (strain ATCC 25905 / DSM 1728 / JCM 9062 / NBRC 15155 / AMRC-C165)).